The sequence spans 375 residues: 4-hydroxy-3-methylbut-2-en-1-yl diphosphate synthase (flavodoxin) (375 aa).

Residues Cys-270, Cys-273, Cys-305, and Glu-312 each coordinate [4Fe-4S] cluster.

This sequence belongs to the IspG family. Requires [4Fe-4S] cluster as cofactor.

It carries out the reaction (2E)-4-hydroxy-3-methylbut-2-enyl diphosphate + oxidized [flavodoxin] + H2O + 2 H(+) = 2-C-methyl-D-erythritol 2,4-cyclic diphosphate + reduced [flavodoxin]. The protein operates within isoprenoid biosynthesis; isopentenyl diphosphate biosynthesis via DXP pathway; isopentenyl diphosphate from 1-deoxy-D-xylulose 5-phosphate: step 5/6. Its function is as follows. Converts 2C-methyl-D-erythritol 2,4-cyclodiphosphate (ME-2,4cPP) into 1-hydroxy-2-methyl-2-(E)-butenyl 4-diphosphate. The polypeptide is 4-hydroxy-3-methylbut-2-en-1-yl diphosphate synthase (flavodoxin) (Yersinia pestis (strain Pestoides F)).